Consider the following 389-residue polypeptide: MGICASSEQLEHVHETDESIVYVKDEQGRGGRGVESGGARKVASLFSQRGKKGPNQDSVILCQGFGMEDGVFCGVFDGHGRCGQFISKLVRDYLPFMILSHRNALLLADAAADDDDDAAFSDDAAASSSADSSGNSSPQPSASASAQMLEEWRQACASAFAAMDGELKLQPNLDCAFSGTTAVCAIKQGRDLIIANLGDSRAVLATMSDTGYLQAVQLTVDHKPSVPEEAARIKRSGGRVFGLKDEPGVMRVWLPGENSPGLAMARSLGDMRLKRHGVIPAPEVTSRRVTGADLFMVLATDGVWDVLSNEEVVSIVCATPRKQHASKAVVEAAVQRWRAKFPTSRVDDCSAVCLFLHDHTLGTAAAASAAAAAAARKARRASTATPPAS.

One can recognise a PPM-type phosphatase domain in the interval 42–356; it reads VASLFSQRGK…DDCSAVCLFL (315 aa). The Mn(2+) site is built by Asp77 and Gly78. The tract at residues 119–145 is disordered; it reads AFSDDAAASSSADSSGNSSPQPSASAS. Residues 121-145 show a composition bias toward low complexity; it reads SDDAAASSSADSSGNSSPQPSASAS. Positions 301 and 347 each coordinate Mn(2+).

The protein belongs to the PP2C family. Requires Mg(2+) as cofactor. It depends on Mn(2+) as a cofactor.

It catalyses the reaction O-phospho-L-seryl-[protein] + H2O = L-seryl-[protein] + phosphate. The enzyme catalyses O-phospho-L-threonyl-[protein] + H2O = L-threonyl-[protein] + phosphate. This is Probable protein phosphatase 2C 12 from Oryza sativa subsp. japonica (Rice).